We begin with the raw amino-acid sequence, 918 residues long: GPI ethanolamine phosphate transferase 3 (918 aa).

Residues 16–36 traverse the membrane as a helical segment; sequence IGTWKYIQACIFFAIILISNF. Residues Asn54, Asn71, Asn101, Asn197, and Asn399 are each glycosylated (N-linked (GlcNAc...) asparagine). 15 consecutive transmembrane segments (helical) span residues 429–449, 459–479, 486–506, 523–543, 547–563, 567–587, 616–636, 651–671, 687–707, 715–735, 738–758, 762–782, 813–833, 853–873, and 887–907; these read LFPM…LALL, MSAN…ILIL, SPFP…LNSF, FSIF…FTVW, LCHF…FCKC, MSPL…LQVI, TLIV…ILQL, LSIL…HHVF, SLAN…FFLL, INVI…LSFL, PLGH…IQLK, PSVG…SHFF, IFMF…IPLF, FSFI…AGFF, and FMLS…QCFG.

The protein belongs to the PIGG/PIGN/PIGO family. PIGO subfamily. In terms of processing, glycosylated.

The protein localises to the endoplasmic reticulum membrane. The protein operates within glycolipid biosynthesis; glycosylphosphatidylinositol-anchor biosynthesis. Involved in glycosylphosphatidylinositol-anchor biosynthesis. Transfers ethanolamine phosphate to the GPI third mannose which links the GPI-anchor to the C-terminus of the proteins by an amide bond. Involved in cell wall biosynthesis. The sequence is that of GPI ethanolamine phosphate transferase 3 (gpi13) from Schizosaccharomyces pombe (strain 972 / ATCC 24843) (Fission yeast).